Reading from the N-terminus, the 302-residue chain is Sulfate adenylyltransferase subunit 2 (302 aa).

A disordered region spans residues 279-302 (ERQGRAIDHDQSGSMELKKRQGYF). Positions 280-302 (RQGRAIDHDQSGSMELKKRQGYF) are enriched in basic and acidic residues.

It belongs to the PAPS reductase family. CysD subfamily. In terms of assembly, heterodimer composed of CysD, the smaller subunit, and CysN.

It catalyses the reaction sulfate + ATP + H(+) = adenosine 5'-phosphosulfate + diphosphate. Its pathway is sulfur metabolism; hydrogen sulfide biosynthesis; sulfite from sulfate: step 1/3. In terms of biological role, with CysN forms the ATP sulfurylase (ATPS) that catalyzes the adenylation of sulfate producing adenosine 5'-phosphosulfate (APS) and diphosphate, the first enzymatic step in sulfur assimilation pathway. APS synthesis involves the formation of a high-energy phosphoric-sulfuric acid anhydride bond driven by GTP hydrolysis by CysN coupled to ATP hydrolysis by CysD. The protein is Sulfate adenylyltransferase subunit 2 of Photobacterium profundum (strain SS9).